Consider the following 127-residue polypeptide: Large ribosomal subunit protein bL17 (127 aa).

It belongs to the bacterial ribosomal protein bL17 family. Part of the 50S ribosomal subunit. Contacts protein L32.

This is Large ribosomal subunit protein bL17 from Photobacterium profundum (strain SS9).